The chain runs to 226 residues: Cytidylate kinase (226 aa).

Residue 12-20 (GPSGAGKGT) coordinates ATP.

It belongs to the cytidylate kinase family. Type 1 subfamily.

The protein resides in the cytoplasm. The catalysed reaction is CMP + ATP = CDP + ADP. The enzyme catalyses dCMP + ATP = dCDP + ADP. The protein is Cytidylate kinase of Vibrio parahaemolyticus serotype O3:K6 (strain RIMD 2210633).